The sequence spans 469 residues: tRNA modification GTPase MnmE (469 aa).

(6S)-5-formyl-5,6,7,8-tetrahydrofolate contacts are provided by arginine 26, glutamate 88, and arginine 127. Positions 222–390 (GLKVAIVGRP…LEDAILHLVQ (169 aa)) constitute a TrmE-type G domain. Asparagine 232 serves as a coordination point for K(+). GTP is bound by residues 232 to 237 (NVGKSS), 251 to 257 (TDLPGTT), 276 to 279 (DTAG), and 344 to 347 (NKAD). Serine 236 serves as a coordination point for Mg(2+). K(+) is bound by residues threonine 251, leucine 253, and threonine 256. Residue threonine 257 participates in Mg(2+) binding. Position 469 (lysine 469) interacts with (6S)-5-formyl-5,6,7,8-tetrahydrofolate.

Belongs to the TRAFAC class TrmE-Era-EngA-EngB-Septin-like GTPase superfamily. TrmE GTPase family. In terms of assembly, homodimer. Heterotetramer of two MnmE and two MnmG subunits. K(+) serves as cofactor.

The protein resides in the cytoplasm. Its function is as follows. Exhibits a very high intrinsic GTPase hydrolysis rate. Involved in the addition of a carboxymethylaminomethyl (cmnm) group at the wobble position (U34) of certain tRNAs, forming tRNA-cmnm(5)s(2)U34. The polypeptide is tRNA modification GTPase MnmE (Synechococcus elongatus).